A 483-amino-acid chain; its full sequence is Auxin transporter-like protein 2 (483 aa).

Residues 1-53 are Cytoplasmic-facing; the sequence is MENGEKAAETVVVGNYVEMEKDGKALDIKSKLSDMFWHGGSAYDAWFSCASNQ. Residues 54–71 form a helical membrane-spanning segment; the sequence is VAQVLLTLPYSFSQLGML. The Extracellular segment spans residues 72–73; sequence SG. The chain crosses the membrane as a helical span at residues 74-94; the sequence is ILFQLFYGILGSWTAYLISIL. Topologically, residues 95-130 are cytoplasmic; sequence YVEYRTRKEREKVNFRNHVIQWFEVLDGLLGKHWRN. The chain crosses the membrane as a helical span at residues 131-151; the sequence is VGLAFNCTFLLFGSVIQLIAC. The Extracellular segment spans residues 152-166; sequence ASNIYYINDNLDKRT. A helical transmembrane segment spans residues 167 to 187; that stretch reads WTYIFGACCATTVFIPSFHNY. Topologically, residues 188 to 190 are cytoplasmic; sequence RIW. A helical membrane pass occupies residues 191 to 211; the sequence is SFLGLLMTTYTAWYLTIASIL. Residues 212–226 are Extracellular-facing; that stretch reads HGQVEGVKHSGPSKL. A helical membrane pass occupies residues 227 to 247; it reads VLYFTGATNILYTFGGHAVTV. At 248–261 the chain is on the cytoplasmic side; it reads EIMHAMWKPQKFKS. Residues 262-282 form a helical membrane-spanning segment; it reads IYLFATLYVLTLTLPSASAVY. The Extracellular segment spans residues 283–306; sequence WAFGDLLLNHSNAFALLPKNLYRD. Residue Asn291 is glycosylated (N-linked (GlcNAc...) asparagine). The chain crosses the membrane as a helical span at residues 307-327; it reads FAVVLMLIHQFITFGFACTPL. The Cytoplasmic portion of the chain corresponds to 328–350; sequence YFVWEKLIGMHECRSMCKRAAAR. Residues 351 to 371 traverse the membrane as a helical segment; it reads LPVVIPIWFLAIIFPFFGPIN. Residues 372-374 are Extracellular-facing; sequence STV. The chain crosses the membrane as a helical span at residues 375 to 395; the sequence is GSLLVSFTVYIIPALAHIFTF. The Cytoplasmic portion of the chain corresponds to 396 to 422; the sequence is RSSAARENAVEQPPRFLGRWTGAFTIN. The helical transmembrane segment at 423–443 threads the bilayer; the sequence is AFIVVWVFIVGFGFGGWASMI. At 444–483 the chain is on the extracellular side; it reads NFVHQIDTFGLFTKCYQCPPPVMVSPPPISHPHFNHTHGL. The N-linked (GlcNAc...) asparagine glycan is linked to Asn478.

The protein belongs to the amino acid/polyamine transporter 2 family. Amino acid/auxin permease (AAAP) (TC 2.A.18.1) subfamily.

Its subcellular location is the cell membrane. Functionally, carrier protein involved in proton-driven auxin influx. Mediates the formation of auxin gradient from developing leaves (site of auxin biosynthesis) to tips by contributing to the loading of auxin in vascular tissues and facilitating acropetal (base to tip) auxin transport within inner tissues of the root apex, and basipetal (tip to base) auxin transport within outer tissues of the root apex. The protein is Auxin transporter-like protein 2 (LAX2) of Arabidopsis thaliana (Mouse-ear cress).